Here is a 294-residue protein sequence, read N- to C-terminus: Cytidine deaminase (294 aa).

CMP/dCMP-type deaminase domains follow at residues 48 to 168 and 186 to 294; these read DEDA…FGPK and LTGD…VLLA. 89–91 provides a ligand contact to substrate; the sequence is NME. Zn(2+) is bound at residue His-102. Catalysis depends on Glu-104, which acts as the Proton donor. Residues Cys-129 and Cys-132 each coordinate Zn(2+).

Belongs to the cytidine and deoxycytidylate deaminase family. In terms of assembly, homodimer. Requires Zn(2+) as cofactor.

It catalyses the reaction cytidine + H2O + H(+) = uridine + NH4(+). The catalysed reaction is 2'-deoxycytidine + H2O + H(+) = 2'-deoxyuridine + NH4(+). Functionally, this enzyme scavenges exogenous and endogenous cytidine and 2'-deoxycytidine for UMP synthesis. The sequence is that of Cytidine deaminase from Shigella dysenteriae serotype 1 (strain Sd197).